The sequence spans 415 residues: Heterogeneous nuclear ribonucleoprotein F (415 aa).

Methionine 1 carries the N-acetylmethionine modification. At methionine 2 the chain carries N-acetylmethionine; in Heterogeneous nuclear ribonucleoprotein F, N-terminally processed. In terms of domain architecture, RRM 1 spans 11 to 90 (YVVKLRGLPW…RYIEVFKSHR (80 aa)). Residue lysine 72 forms a Glycyl lysine isopeptide (Lys-Gly) (interchain with G-Cter in SUMO) linkage. The interval 81 to 86 (RYIEVF) is interaction with RNA. Lysine 87 is covalently cross-linked (Glycyl lysine isopeptide (Lys-Gly) (interchain with G-Cter in SUMO2)). 3 positions are modified to phosphoserine: serine 104, serine 107, and serine 161. The region spanning 111–188 (GFVRLRGLPF…RYIEVFKSSQ (78 aa)) is the RRM 2 domain. Lysine 167 is covalently cross-linked (Glycyl lysine isopeptide (Lys-Gly) (interchain with G-Cter in SUMO2)). Residues 179–184 (RYIEVF) are interaction with RNA. Lysine 185 is covalently cross-linked (Glycyl lysine isopeptide (Lys-Gly) (interchain with G-Cter in SUMO2)). Residues serine 187, serine 193, and serine 195 each carry the phosphoserine modification. At lysine 200 the chain carries N6-acetyllysine; alternate. Lysine 200 participates in a covalent cross-link: Glycyl lysine isopeptide (Lys-Gly) (interchain with G-Cter in SUMO2); alternate. Threonine 215 is subject to Phosphothreonine. Lysine 224 carries the N6-acetyllysine; alternate modification. Residue lysine 224 forms a Glycyl lysine isopeptide (Lys-Gly) (interchain with G-Cter in SUMO2); alternate linkage. At serine 265 the chain carries Phosphoserine. The region spanning 289–366 (HCVHMRGLPY…IELFLNSTTG (78 aa)) is the RRM 3 domain. The segment at 355–360 (RYIELF) is interaction with RNA.

As to quaternary structure, identified in the spliceosome C complex. Interacts with AGO1, AGO2, TBP and TXNL4/DIM1. Sumoylated.

It localises to the nucleus. It is found in the nucleoplasm. Component of the heterogeneous nuclear ribonucleoprotein (hnRNP) complexes which provide the substrate for the processing events that pre-mRNAs undergo before becoming functional, translatable mRNAs in the cytoplasm. Plays a role in the regulation of alternative splicing events. Binds G-rich sequences in pre-mRNAs and keeps target RNA in an unfolded state. This Mus musculus (Mouse) protein is Heterogeneous nuclear ribonucleoprotein F (Hnrnpf).